The sequence spans 226 residues: Enolase-phosphatase E1 (226 aa).

Residues D9 and E11 each contribute to the Mg(2+) site. Substrate contacts are provided by residues 115-116 (SS) and K160. D185 contacts Mg(2+).

This sequence belongs to the HAD-like hydrolase superfamily. MasA/MtnC family. As to quaternary structure, monomer. The cofactor is Mg(2+).

The protein resides in the cytoplasm. Its subcellular location is the nucleus. The enzyme catalyses 5-methylsulfanyl-2,3-dioxopentyl phosphate + H2O = 1,2-dihydroxy-5-(methylsulfanyl)pent-1-en-3-one + phosphate. It participates in amino-acid biosynthesis; L-methionine biosynthesis via salvage pathway; L-methionine from S-methyl-5-thio-alpha-D-ribose 1-phosphate: step 3/6. Its pathway is amino-acid biosynthesis; L-methionine biosynthesis via salvage pathway; L-methionine from S-methyl-5-thio-alpha-D-ribose 1-phosphate: step 4/6. Bifunctional enzyme that catalyzes the enolization of 2,3-diketo-5-methylthiopentyl-1-phosphate (DK-MTP-1-P) into the intermediate 2-hydroxy-3-keto-5-methylthiopentenyl-1-phosphate (HK-MTPenyl-1-P), which is then dephosphorylated to form the acireductone 1,2-dihydroxy-3-keto-5-methylthiopentene (DHK-MTPene). The polypeptide is Enolase-phosphatase E1 (Zygosaccharomyces rouxii (strain ATCC 2623 / CBS 732 / NBRC 1130 / NCYC 568 / NRRL Y-229)).